Here is a 487-residue protein sequence, read N- to C-terminus: Bifunctional protein GlmU (487 aa).

The pyrophosphorylase stretch occupies residues 1–240 (MAEVTNCAAI…PEELSGVNDR (240 aa)). UDP-N-acetyl-alpha-D-glucosamine-binding positions include 12–15 (LAAG), lysine 26, glutamine 83, and 88–89 (GT). Aspartate 113 contributes to the Mg(2+) binding site. UDP-N-acetyl-alpha-D-glucosamine-binding residues include glycine 150, glutamate 165, asparagine 180, and asparagine 238. Asparagine 238 is a binding site for Mg(2+). Positions 241–261 (VQLAAAGRLLNRRMVEEAMRG) are linker. The tract at residues 262 to 487 (GTTIVDPDTT…DAKANDQTTN (226 aa)) is N-acetyltransferase. The UDP-N-acetyl-alpha-D-glucosamine site is built by arginine 343 and lysine 361. Catalysis depends on histidine 373, which acts as the Proton acceptor. 2 residues coordinate UDP-N-acetyl-alpha-D-glucosamine: tyrosine 376 and asparagine 387. Acetyl-CoA contacts are provided by residues alanine 390, 396 to 397 (NY), serine 415, and alanine 433. The disordered stretch occupies residues 449 to 487 (SGGKQRNIEGWVQKKRPGTPAAEAAGKAQDAKANDQTTN).

This sequence in the N-terminal section; belongs to the N-acetylglucosamine-1-phosphate uridyltransferase family. It in the C-terminal section; belongs to the transferase hexapeptide repeat family. As to quaternary structure, homotrimer. The cofactor is Mg(2+).

The protein resides in the cytoplasm. It carries out the reaction alpha-D-glucosamine 1-phosphate + acetyl-CoA = N-acetyl-alpha-D-glucosamine 1-phosphate + CoA + H(+). It catalyses the reaction N-acetyl-alpha-D-glucosamine 1-phosphate + UTP + H(+) = UDP-N-acetyl-alpha-D-glucosamine + diphosphate. Its pathway is nucleotide-sugar biosynthesis; UDP-N-acetyl-alpha-D-glucosamine biosynthesis; N-acetyl-alpha-D-glucosamine 1-phosphate from alpha-D-glucosamine 6-phosphate (route II): step 2/2. The protein operates within nucleotide-sugar biosynthesis; UDP-N-acetyl-alpha-D-glucosamine biosynthesis; UDP-N-acetyl-alpha-D-glucosamine from N-acetyl-alpha-D-glucosamine 1-phosphate: step 1/1. It participates in bacterial outer membrane biogenesis; LPS lipid A biosynthesis. Its function is as follows. Catalyzes the last two sequential reactions in the de novo biosynthetic pathway for UDP-N-acetylglucosamine (UDP-GlcNAc). The C-terminal domain catalyzes the transfer of acetyl group from acetyl coenzyme A to glucosamine-1-phosphate (GlcN-1-P) to produce N-acetylglucosamine-1-phosphate (GlcNAc-1-P), which is converted into UDP-GlcNAc by the transfer of uridine 5-monophosphate (from uridine 5-triphosphate), a reaction catalyzed by the N-terminal domain. The sequence is that of Bifunctional protein GlmU from Corynebacterium aurimucosum (strain ATCC 700975 / DSM 44827 / CIP 107346 / CN-1) (Corynebacterium nigricans).